The primary structure comprises 338 residues: Phenylalanine--tRNA ligase alpha subunit (338 aa).

Glu253 is a Mg(2+) binding site.

It belongs to the class-II aminoacyl-tRNA synthetase family. Phe-tRNA synthetase alpha subunit type 1 subfamily. Tetramer of two alpha and two beta subunits. Mg(2+) serves as cofactor.

It localises to the cytoplasm. It catalyses the reaction tRNA(Phe) + L-phenylalanine + ATP = L-phenylalanyl-tRNA(Phe) + AMP + diphosphate + H(+). The protein is Phenylalanine--tRNA ligase alpha subunit of Geobacter metallireducens (strain ATCC 53774 / DSM 7210 / GS-15).